The chain runs to 86 residues: Translation initiation factor IF-1 (86 aa).

The region spanning 1–72 is the S1-like domain; sequence MPKDDVIKME…TKGRIVYRKK (72 aa).

Belongs to the IF-1 family. As to quaternary structure, component of the 30S ribosomal translation pre-initiation complex which assembles on the 30S ribosome in the order IF-2 and IF-3, IF-1 and N-formylmethionyl-tRNA(fMet); mRNA recruitment can occur at any time during PIC assembly.

Its subcellular location is the cytoplasm. Its function is as follows. One of the essential components for the initiation of protein synthesis. Stabilizes the binding of IF-2 and IF-3 on the 30S subunit to which N-formylmethionyl-tRNA(fMet) subsequently binds. Helps modulate mRNA selection, yielding the 30S pre-initiation complex (PIC). Upon addition of the 50S ribosomal subunit IF-1, IF-2 and IF-3 are released leaving the mature 70S translation initiation complex. This Pseudothermotoga lettingae (strain ATCC BAA-301 / DSM 14385 / NBRC 107922 / TMO) (Thermotoga lettingae) protein is Translation initiation factor IF-1.